The sequence spans 472 residues: Flap endonuclease 1 (472 aa).

Positions 1–106 are N-domain; sequence MGIKGLARFL…EELMKRKERR (106 aa). Asp-34 contributes to the Mg(2+) binding site. The DNA site is built by Arg-47 and Arg-72. Mg(2+)-binding residues include Asp-88, Glu-160, Glu-162, Asp-181, and Asp-183. An I-domain region spans residues 124–263; that stretch reads TIRKQLIRTI…LTAYKLLKKH (140 aa). A DNA-binding site is contributed by Glu-160. Residues Gly-241 and Asp-243 each coordinate DNA. Asp-243 contacts Mg(2+). An interaction with PCNA region spans residues 348–356; the sequence is AQTSLDSFF.

The protein belongs to the XPG/RAD2 endonuclease family. FEN1 subfamily. As to quaternary structure, interacts with PCNA. Three molecules of FEN1 bind to one PCNA trimer with each molecule binding to one PCNA monomer. PCNA stimulates the nuclease activity without altering cleavage specificity. Requires Mg(2+) as cofactor. In terms of processing, phosphorylated. Phosphorylation upon DNA damage induces relocalization to the nuclear plasma.

The protein resides in the nucleus. It localises to the nucleolus. The protein localises to the nucleoplasm. Its subcellular location is the mitochondrion. Its function is as follows. Structure-specific nuclease with 5'-flap endonuclease and 5'-3' exonuclease activities involved in DNA replication and repair. During DNA replication, cleaves the 5'-overhanging flap structure that is generated by displacement synthesis when DNA polymerase encounters the 5'-end of a downstream Okazaki fragment. It enters the flap from the 5'-end and then tracks to cleave the flap base, leaving a nick for ligation. Also involved in the long patch base excision repair (LP-BER) pathway, by cleaving within the apurinic/apyrimidinic (AP) site-terminated flap. Acts as a genome stabilization factor that prevents flaps from equilibrating into structures that lead to duplications and deletions. Also possesses 5'-3' exonuclease activity on nicked or gapped double-stranded DNA, and exhibits RNase H activity. Also involved in replication and repair of rDNA and in repairing mitochondrial DNA. The protein is Flap endonuclease 1 of Cryptosporidium muris (strain RN66).